The primary structure comprises 415 residues: Imidazolonepropionase (415 aa).

His76 and His78 together coordinate Fe(3+). Zn(2+) is bound by residues His76 and His78. Residues Arg85, Tyr148, and His181 each contribute to the 4-imidazolone-5-propanoate site. Residue Tyr148 participates in N-formimidoyl-L-glutamate binding. His246 is a binding site for Fe(3+). Residue His246 coordinates Zn(2+). Glu249 lines the 4-imidazolone-5-propanoate pocket. Asp320 is a binding site for Fe(3+). Position 320 (Asp320) interacts with Zn(2+). N-formimidoyl-L-glutamate contacts are provided by Asn322 and Gly324. Thr325 is a binding site for 4-imidazolone-5-propanoate.

This sequence belongs to the metallo-dependent hydrolases superfamily. HutI family. The cofactor is Zn(2+). It depends on Fe(3+) as a cofactor.

Its subcellular location is the cytoplasm. The enzyme catalyses 4-imidazolone-5-propanoate + H2O = N-formimidoyl-L-glutamate. The protein operates within amino-acid degradation; L-histidine degradation into L-glutamate; N-formimidoyl-L-glutamate from L-histidine: step 3/3. Catalyzes the hydrolytic cleavage of the carbon-nitrogen bond in imidazolone-5-propanoate to yield N-formimidoyl-L-glutamate. It is the third step in the universal histidine degradation pathway. This chain is Imidazolonepropionase, found in Caldanaerobacter subterraneus subsp. tengcongensis (strain DSM 15242 / JCM 11007 / NBRC 100824 / MB4) (Thermoanaerobacter tengcongensis).